We begin with the raw amino-acid sequence, 274 residues long: Large ribosomal subunit protein uL2cz/uL2cy (274 aa).

Disordered regions lie at residues 1–22 and 225–252; these read MAIHLYKTSTPSTRNGAVDSQV and PVDHPHGGGEGRAPIGRKKPVTPWGYPA.

This sequence belongs to the universal ribosomal protein uL2 family. Part of the 50S ribosomal subunit.

The protein localises to the plastid. It is found in the chloroplast. This Barbarea verna (Land cress) protein is Large ribosomal subunit protein uL2cz/uL2cy (rpl2-A).